The chain runs to 142 residues: Neuritin (142 aa).

Positions 1-27 are cleaved as a signal peptide; sequence MGLKLNGRYISLILAVQIAYLVQAVRA. Gly-116 carries GPI-anchor amidated glycine lipidation. Positions 117-142 are cleaved as a propeptide — removed in mature form; sequence AAGPLLPALPVLLVSLSAALATWLSF.

Belongs to the neuritin family. Component of the outer core of AMPAR complex. AMPAR complex consists of an inner core made of 4 pore-forming GluA/GRIA proteins (GRIA1, GRIA2, GRIA3 and GRIA4) and 4 major auxiliary subunits arranged in a twofold symmetry. One of the two pairs of distinct binding sites is occupied either by CNIH2, CNIH3 or CACNG2, CACNG3. The other harbors CACNG2, CACNG3, CACNG4, CACNG8 or GSG1L. This inner core of AMPAR complex is complemented by outer core constituents binding directly to the GluA/GRIA proteins at sites distinct from the interaction sites of the inner core constituents. Outer core constituents include at least PRRT1, PRRT2, CKAMP44/SHISA9, FRRS1L and NRN1. The proteins of the inner and outer core serve as a platform for other, more peripherally associated AMPAR constituents. Alone or in combination, these auxiliary subunits control the gating and pharmacology of the AMPAR complex and profoundly impact their biogenesis and protein processing.

The protein localises to the cell membrane. It localises to the synapse. In terms of biological role, promotes neurite outgrowth and especially branching of neuritic processes in primary hippocampal and cortical cells. The chain is Neuritin (NRN1) from Bos taurus (Bovine).